We begin with the raw amino-acid sequence, 103 residues long: UPF0145 protein Rsph17025_2361 (103 aa).

It belongs to the UPF0145 family.

The chain is UPF0145 protein Rsph17025_2361 from Cereibacter sphaeroides (strain ATCC 17025 / ATH 2.4.3) (Rhodobacter sphaeroides).